The following is a 249-amino-acid chain: DNA polymerase sliding clamp 1 (249 aa).

The protein belongs to the PCNA family. In terms of assembly, forms heterodimers with PCNA2, which then recruit PCNA3; does not form homotrimers. The heterodimers interact with RfcS homotetramers. Heterotrimer which circularizes head-to-tail (head is at N-terminus, tail is at C-terminus) to form a toroid; DNA passes through its center. Replication factor C (RFC) is required to load the toroid on the DNA. Heterotrimer interacts, probably via this subunit, with flap endonuclease 1 (fen), Hjc, Dpo4, and XPF.

Its function is as follows. One of the sliding clamp subunits that acts as a moving platform for DNA processing. Responsible for tethering the catalytic subunit of DNA polymerase to DNA during high-speed replication. Heterotrimer stimulates the Holliday junction resolvase Hjc. DNA polymerase I, DNA ligase and the flap endonuclease may be constitutively associated with the PCNA heterotrimer forming a scanning complex able to couple DNA synthesis and Okazaki fragment maturation. The sequence is that of DNA polymerase sliding clamp 1 from Saccharolobus solfataricus (strain ATCC 35092 / DSM 1617 / JCM 11322 / P2) (Sulfolobus solfataricus).